Reading from the N-terminus, the 115-residue chain is Ribonuclease P protein component (115 aa).

It belongs to the RnpA family. As to quaternary structure, consists of a catalytic RNA component (M1 or rnpB) and a protein subunit.

It carries out the reaction Endonucleolytic cleavage of RNA, removing 5'-extranucleotides from tRNA precursor.. Its function is as follows. RNaseP catalyzes the removal of the 5'-leader sequence from pre-tRNA to produce the mature 5'-terminus. It can also cleave other RNA substrates such as 4.5S RNA. The protein component plays an auxiliary but essential role in vivo by binding to the 5'-leader sequence and broadening the substrate specificity of the ribozyme. This is Ribonuclease P protein component from Bacillus cereus (strain Q1).